Here is a 195-residue protein sequence, read N- to C-terminus: dTTP/UTP pyrophosphatase (195 aa).

D73 functions as the Proton acceptor in the catalytic mechanism.

This sequence belongs to the Maf family. YhdE subfamily. It depends on a divalent metal cation as a cofactor.

The protein localises to the cytoplasm. The catalysed reaction is dTTP + H2O = dTMP + diphosphate + H(+). It catalyses the reaction UTP + H2O = UMP + diphosphate + H(+). Its function is as follows. Nucleoside triphosphate pyrophosphatase that hydrolyzes dTTP and UTP. May have a dual role in cell division arrest and in preventing the incorporation of modified nucleotides into cellular nucleic acids. This is dTTP/UTP pyrophosphatase from Desulfotalea psychrophila (strain LSv54 / DSM 12343).